A 1042-amino-acid chain; its full sequence is Serine/threonine-protein kinase LATS2 (1042 aa).

Residues 23 to 44 are disordered; that stretch reads REGLKQPSKASTQGLLVGPNSD. The segment covering 30–44 has biased composition (polar residues); the sequence is SKASTQGLLVGPNSD. S82 is modified (phosphoserine; by AURKA). Residues 97-138 enclose the UBA domain; sequence EVNRQMLQELVNAGCDQEMAGRALKQTGSRSIEAALEYISKM. Residues 100 to 140 are interaction with ubiquitinated AMOTL2; that stretch reads RQMLQELVNAGCDQEMAGRALKQTGSRSIEAALEYISKMGY. The segment at 237–282 is disordered; it reads HFPGTHYGRGHLLSEQPGYGVQRSSSFQNKTPPDAYSSMAKAQGGP. Polar residues predominate over residues 258–267; it reads QRSSSFQNKT. T267 is modified (phosphothreonine). A Phosphoserine modification is found at S362. Disordered stretches follow at residues 378–399, 442–481, and 501–550; these read RAGP…LPAP, PATE…HLLL, and QSLR…KRES. The short motif at 472–475 is the PPxY motif element; the sequence is PPPY. Basic and acidic residues predominate over residues 507 to 530; the sequence is TEQDRSDKSHKGAKGDKAGRDKKQ. S534 carries the post-translational modification Phosphoserine. Basic and acidic residues predominate over residues 541 to 550; the sequence is NSRDEEKRES. The region spanning 626 to 931 is the Protein kinase domain; the sequence is FVKIKTLGIG…ADDLKAHPFF (306 aa). ATP contacts are provided by residues 632 to 640 and K655; that span reads LGIGAFGEV. D749 (proton acceptor) is an active-site residue. One can recognise an AGC-kinase C-terminal domain in the interval 932-1010; sequence NTIDFSRDIR…RRFFDDNGYP (79 aa). Residue T999 is modified to Phosphothreonine. The segment at 1014–1042 is disordered; sequence PKPSEPAESADPGDADLEGAAEGCQPVYV.

This sequence belongs to the protein kinase superfamily. AGC Ser/Thr protein kinase family. Interacts with and is phosphorylated by AURKA. Binds to AR. Interacts with AJUBA during mitosis and this complex regulates organization of the spindle apparatus through recruitment of gamma-tubulin to the centrosome. Interacts (via PPxY motif) with YAP1 (via WW domains). Interacts with MOB1A and MOB1B. Interacts with LIMD1, WTIP and AJUBA. Interacts with SNAI1. Interacts with WWC1, WWC2 and WWC3 (via their WW domains). Interacts (via UBA domain) with ubiquitinated AMOTL2; the interaction promotes LATS2 phosphorylation of YAP1. It depends on Mg(2+) as a cofactor. In terms of processing, autophosphorylated and phosphorylated during M-phase and the G1/S-phase of the cell cycle. Phosphorylated and activated by STK3/MST2. Phosphorylated by MAP4Ks; in parallel to STK3/MST2 and resulting to its activation. Phosphorylation by NUAK2 may regulate its activity in phosphorylation and inactivation YAP1. In terms of tissue distribution, expressed at high levels in ovary and testis and at lower levels in all other tissues examined.

The protein localises to the cytoplasm. The protein resides in the cytoskeleton. Its subcellular location is the microtubule organizing center. It localises to the centrosome. It is found in the spindle pole. The protein localises to the nucleus. The catalysed reaction is L-seryl-[protein] + ATP = O-phospho-L-seryl-[protein] + ADP + H(+). It catalyses the reaction L-threonyl-[protein] + ATP = O-phospho-L-threonyl-[protein] + ADP + H(+). In terms of biological role, negative regulator of YAP1 in the Hippo signaling pathway that plays a pivotal role in organ size control and tumor suppression by restricting proliferation and promoting apoptosis. The core of this pathway is composed of a kinase cascade wherein STK3/MST2 and STK4/MST1, in complex with its regulatory protein SAV1, phosphorylates and activates LATS1/2 in complex with its regulatory protein MOB1, which in turn phosphorylates and inactivates YAP1 oncoprotein and WWTR1/TAZ. Phosphorylation of YAP1 by LATS2 inhibits its translocation into the nucleus to regulate cellular genes important for cell proliferation, cell death, and cell migration. Also phosphorylates YAP1 in response to cell contact inhibition-driven WWP1 ubiquitination of AMOTL2, which results in LATS2 activation. Acts as a tumor suppressor which plays a critical role in centrosome duplication, maintenance of mitotic fidelity and genomic stability. Negatively regulates G1/S transition by down-regulating cyclin E/CDK2 kinase activity. Negative regulator of the androgen receptor. Phosphorylates SNAI1 in the nucleus leading to its nuclear retention and stabilization, which enhances its epithelial-mesenchymal transition and tumor cell invasion/migration activities. This tumor-promoting activity is independent of its effects upon YAP1 or WWTR1/TAZ. Acts as an activator of the NLRP3 inflammasome by mediating phosphorylation of 'Ser-265' of NLRP3 following NLRP3 palmitoylation, promoting NLRP3 activation by NEK7. The sequence is that of Serine/threonine-protein kinase LATS2 from Mus musculus (Mouse).